Consider the following 643-residue polypeptide: Nicastrin (643 aa).

Positions 1–20 are cleaved as a signal peptide; the sequence is MRFKNVLVLLLLLVFSVINS. Topologically, residues 21–611 are extracellular; that stretch reads EPSAPATISD…VFKIGNSTTE (591 aa). The cysteines at positions 42 and 54 are disulfide-linked. Asn96 and Asn166 each carry an N-linked (GlcNAc...) asparagine glycan. Intrachain disulfides connect Cys204-Cys210 and Cys308-Cys318. 2 N-linked (GlcNAc...) asparagine glycosylation sites follow: Asn333 and Asn385. 3 disulfides stabilise this stretch: Cys479–Cys486, Cys540–Cys551, and Cys546–Cys556. Residue Asn584 is glycosylated (N-linked (GlcNAc...) asparagine). Residues 612-632 traverse the membrane as a helical segment; that stretch reads IWFLVSGLIELLVSIGLILYV. Topologically, residues 633–643 are cytoplasmic; the sequence is KKFLSNRYKLL.

Belongs to the nicastrin family. Component of the gamma-secretase complex, a complex composed of a presenilin homodimer, nicastrin, aph1 and pen2.

It is found in the membrane. Essential subunit of the gamma-secretase complex, an endoprotease complex that catalyzes the intramembrane cleavage of integral membrane proteins such as Notch receptors and APP (amyloid-beta precursor protein). The chain is Nicastrin from Dictyostelium purpureum (Slime mold).